Here is a 262-residue protein sequence, read N- to C-terminus: Probable lipoprotein EnvF (262 aa).

The first 25 residues, 1 to 25, serve as a signal peptide directing secretion; sequence MNKIHVTYKNLLLPITFIAATLISA. Cys-26 carries the N-palmitoyl cysteine lipid modification. Cys-26 carries S-diacylglycerol cysteine lipidation. Positions 227 to 262 are disordered; the sequence is EAEKAQQLVEQSRKDIESQRKKAAGKMNEIQQTFKK. Positions 237–246 are enriched in basic and acidic residues; it reads QSRKDIESQR.

Its subcellular location is the cell membrane. The polypeptide is Probable lipoprotein EnvF (envF) (Salmonella typhimurium (strain LT2 / SGSC1412 / ATCC 700720)).